A 121-amino-acid polypeptide reads, in one-letter code: Ribosome-binding factor A (121 aa).

Belongs to the RbfA family. Monomer. Binds 30S ribosomal subunits, but not 50S ribosomal subunits or 70S ribosomes.

It is found in the cytoplasm. In terms of biological role, one of several proteins that assist in the late maturation steps of the functional core of the 30S ribosomal subunit. Associates with free 30S ribosomal subunits (but not with 30S subunits that are part of 70S ribosomes or polysomes). Required for efficient processing of 16S rRNA. May interact with the 5'-terminal helix region of 16S rRNA. The chain is Ribosome-binding factor A from Clostridium tetani (strain Massachusetts / E88).